Reading from the N-terminus, the 154-residue chain is Cytochrome c oxidase subunit 5A, mitochondrial (154 aa).

The N-terminal 45 residues, 1–45, are a transit peptide targeting the mitochondrion; the sequence is MLAAALRRCXASVRVLLPKPGAAAPSSWSSSAFRATAAIQSVRCY. Positions 2 to 21 match the SIFI-degron motif; sequence LAAALRRCXASVRVLLPKPG. N6-acetyllysine is present on residues K91 and K117. T145 is modified (phosphothreonine).

The protein belongs to the cytochrome c oxidase subunit 5A family. In terms of assembly, component of the cytochrome c oxidase (complex IV, CIV), a multisubunit enzyme composed of 14 subunits. The complex is composed of a catalytic core of 3 subunits MT-CO1, MT-CO2 and MT-CO3, encoded in the mitochondrial DNA, and 11 supernumerary subunits COX4I, COX5A, COX5B, COX6A, COX6B, COX6C, COX7A, COX7B, COX7C, COX8 and NDUFA4, which are encoded in the nuclear genome. The complex exists as a monomer or a dimer and forms supercomplexes (SCs) in the inner mitochondrial membrane with NADH-ubiquinone oxidoreductase (complex I, CI) and ubiquinol-cytochrome c oxidoreductase (cytochrome b-c1 complex, complex III, CIII), resulting in different assemblies (supercomplex SCI(1)III(2)IV(1) and megacomplex MCI(2)III(2)IV(2)). Interacts with AFG1L. Interacts with RAB5IF. Post-translationally, in response to mitochondrial stress, the precursor protein is ubiquitinated by the SIFI complex in the cytoplasm before mitochondrial import, leading to its degradation. Within the SIFI complex, UBR4 initiates ubiquitin chain that are further elongated or branched by KCMF1.

It is found in the mitochondrion inner membrane. It functions in the pathway energy metabolism; oxidative phosphorylation. Component of the cytochrome c oxidase, the last enzyme in the mitochondrial electron transport chain which drives oxidative phosphorylation. The respiratory chain contains 3 multisubunit complexes succinate dehydrogenase (complex II, CII), ubiquinol-cytochrome c oxidoreductase (cytochrome b-c1 complex, complex III, CIII) and cytochrome c oxidase (complex IV, CIV), that cooperate to transfer electrons derived from NADH and succinate to molecular oxygen, creating an electrochemical gradient over the inner membrane that drives transmembrane transport and the ATP synthase. Cytochrome c oxidase is the component of the respiratory chain that catalyzes the reduction of oxygen to water. Electrons originating from reduced cytochrome c in the intermembrane space (IMS) are transferred via the dinuclear copper A center (CU(A)) of subunit 2 and heme A of subunit 1 to the active site in subunit 1, a binuclear center (BNC) formed by heme A3 and copper B (CU(B)). The BNC reduces molecular oxygen to 2 water molecules using 4 electrons from cytochrome c in the IMS and 4 protons from the mitochondrial matrix. The chain is Cytochrome c oxidase subunit 5A, mitochondrial (COX5A) from Notamacropus parma (Parma wallaby).